Reading from the N-terminus, the 327-residue chain is Tetraacyldisaccharide 4'-kinase (327 aa).

52–59 lines the ATP pocket; sequence TLGGAGKT.

This sequence belongs to the LpxK family.

It catalyses the reaction a lipid A disaccharide + ATP = a lipid IVA + ADP + H(+). It participates in glycolipid biosynthesis; lipid IV(A) biosynthesis; lipid IV(A) from (3R)-3-hydroxytetradecanoyl-[acyl-carrier-protein] and UDP-N-acetyl-alpha-D-glucosamine: step 6/6. Transfers the gamma-phosphate of ATP to the 4'-position of a tetraacyldisaccharide 1-phosphate intermediate (termed DS-1-P) to form tetraacyldisaccharide 1,4'-bis-phosphate (lipid IVA). This chain is Tetraacyldisaccharide 4'-kinase, found in Methylorubrum extorquens (strain PA1) (Methylobacterium extorquens).